The sequence spans 331 residues: 6-phosphogluconolactonase (331 aa).

It belongs to the cycloisomerase 2 family.

It catalyses the reaction 6-phospho-D-glucono-1,5-lactone + H2O = 6-phospho-D-gluconate + H(+). Its pathway is carbohydrate degradation; pentose phosphate pathway; D-ribulose 5-phosphate from D-glucose 6-phosphate (oxidative stage): step 2/3. In terms of biological role, catalyzes the hydrolysis of 6-phosphogluconolactone to 6-phosphogluconate. The sequence is that of 6-phosphogluconolactonase from Salmonella gallinarum (strain 287/91 / NCTC 13346).